Here is a 428-residue protein sequence, read N- to C-terminus: Aerobic C4-dicarboxylate transport protein (428 aa).

A run of 8 helical transmembrane segments spans residues 5–27 (LFKS…GHFY), 47–64 (MIIA…IAGM), 77–99 (ALLY…VNVV), 141–163 (VIGA…FGFA), 184–206 (VIFG…AMAF), 219–241 (LGQL…LGSI), 326–348 (IVHQ…GVTG), and 352–374 (IVLA…LILG).

It belongs to the dicarboxylate/amino acid:cation symporter (DAACS) (TC 2.A.23) family.

Its subcellular location is the cell inner membrane. In terms of biological role, responsible for the aerobic transport of the dicarboxylates fumarate and malate and to a lesser extent succinate, from the periplasm across the inner membrane. The chain is Aerobic C4-dicarboxylate transport protein from Escherichia coli O157:H7.